The primary structure comprises 342 residues: MLDTQYSQYIQHRIDQKTKPLGALGLLEKVAHQLALIQSQGKETAVEHIELNKPRIIIFAGDHGIADEGVSIAPSAVTQQMVLNFLSGGAAINCFCAVNNVEITVVDTGILLPVESDSDMLISQRLGTRTNNFANEAAMSLETVERGIELGTELVSRTISNGTNIIMFGEMGIGNTSSASAILSALANRTADECVGLGTGINNEQLARKVAVVKQGIARCINPDAKEVLSQVGGYEIVQMVGGFLGAYENRTPVLVDGFIVSVAAYVATLIEPSCRDYMIFAHRSEESGHKILLELLDAEPLLDLGLRLGEGTGAALAMPIIRAAAEFYNNMASFASAGVTV.

Glu-311 functions as the Proton acceptor in the catalytic mechanism.

This sequence belongs to the CobT family.

It carries out the reaction 5,6-dimethylbenzimidazole + nicotinate beta-D-ribonucleotide = alpha-ribazole 5'-phosphate + nicotinate + H(+). It functions in the pathway nucleoside biosynthesis; alpha-ribazole biosynthesis; alpha-ribazole from 5,6-dimethylbenzimidazole: step 1/2. In terms of biological role, catalyzes the synthesis of alpha-ribazole-5'-phosphate from nicotinate mononucleotide (NAMN) and 5,6-dimethylbenzimidazole (DMB). The protein is Nicotinate-nucleotide--dimethylbenzimidazole phosphoribosyltransferase of Vibrio atlanticus (strain LGP32) (Vibrio splendidus (strain Mel32)).